A 344-amino-acid chain; its full sequence is Arginine N-succinyltransferase (344 aa).

Leucine 125 is a binding site for succinyl-CoA. The active-site Proton donor is the histidine 229.

It belongs to the arginine N-succinyltransferase family.

The enzyme catalyses succinyl-CoA + L-arginine = N(2)-succinyl-L-arginine + CoA + H(+). It functions in the pathway amino-acid degradation; L-arginine degradation via AST pathway; L-glutamate and succinate from L-arginine: step 1/5. Functionally, catalyzes the transfer of succinyl-CoA to arginine to produce N(2)-succinylarginine. This is Arginine N-succinyltransferase from Escherichia coli O17:K52:H18 (strain UMN026 / ExPEC).